The chain runs to 102 residues: ATP-dependent Clp protease adapter protein ClpS (102 aa).

Belongs to the ClpS family. Binds to the N-terminal domain of the chaperone ClpA.

Functionally, involved in the modulation of the specificity of the ClpAP-mediated ATP-dependent protein degradation. The polypeptide is ATP-dependent Clp protease adapter protein ClpS (Aromatoleum aromaticum (strain DSM 19018 / LMG 30748 / EbN1) (Azoarcus sp. (strain EbN1))).